A 450-amino-acid chain; its full sequence is Chromosomal replication initiator protein DnaA (450 aa).

The interval 1-76 (MNLNDILKEL…KKILKQPVNI (76 aa)) is domain I, interacts with DnaA modulators. The domain II stretch occupies residues 76–107 (ISFTYEQEYQKQLEKTESINKDHSDIISKKNK). The tract at residues 108–327 (KVNENTFENF…GSVSRLNFWS (220 aa)) is domain III, AAA+ region. ATP contacts are provided by Gly-151, Gly-153, Lys-154, and Thr-155. Residues 328–450 (QQNPEEKVIT…DILKNKILTK (123 aa)) form a domain IV, binds dsDNA region.

The protein belongs to the DnaA family. In terms of assembly, oligomerizes as a right-handed, spiral filament on DNA at oriC.

The protein localises to the cytoplasm. It is found in the cell membrane. Plays an essential role in the initiation and regulation of chromosomal replication. ATP-DnaA binds to the origin of replication (oriC) to initiate formation of the DNA replication initiation complex once per cell cycle. Binds the DnaA box (a 9 base pair repeat at the origin) and separates the double-stranded (ds)DNA. Forms a right-handed helical filament on oriC DNA; dsDNA binds to the exterior of the filament while single-stranded (ss)DNA is stabiized in the filament's interior. The ATP-DnaA-oriC complex binds and stabilizes one strand of the AT-rich DNA unwinding element (DUE), permitting loading of DNA polymerase. After initiation quickly degrades to an ADP-DnaA complex that is not apt for DNA replication. Binds acidic phospholipids. The polypeptide is Chromosomal replication initiator protein DnaA (Mycoplasma capricolum subsp. capricolum (strain California kid / ATCC 27343 / NCTC 10154)).